Reading from the N-terminus, the 363-residue chain is Ribosome-binding ATPase YchF (363 aa).

The 254-residue stretch at 3 to 256 (FKCGIVGLPN…LDDEEKVEFL (254 aa)) folds into the OBG-type G domain. 12 to 17 (NVGKST) serves as a coordination point for ATP. Positions 16 and 36 each coordinate Mg(2+). The 84-residue stretch at 278–361 (NLQTYFTAGV…QDGDVMHFRF (84 aa)) folds into the TGS domain.

Mg(2+) serves as cofactor.

Its function is as follows. ATPase that binds to both the 70S ribosome and the 50S ribosomal subunit in a nucleotide-independent manner. Does not hydrolyze GTP. This chain is Ribosome-binding ATPase YchF, found in Haemophilus influenzae (strain ATCC 51907 / DSM 11121 / KW20 / Rd).